Here is a 186-residue protein sequence, read N- to C-terminus: Two-component response regulator ARR6 (186 aa).

The region spanning 26–153 (HVLAVDDSHV…DVKRLRDSLM (128 aa)) is the Response regulatory domain. The residue at position 86 (Asp-86) is a 4-aspartylphosphate.

This sequence belongs to the ARR family. Type-A subfamily. Post-translationally, two-component system major event consists of a His-to-Asp phosphorelay between a sensor histidine kinase (HK) and a response regulator (RR). In plants, the His-to-Asp phosphorelay involves an additional intermediate named Histidine-containing phosphotransfer protein (HPt). This multistep phosphorelay consists of a His-Asp-His-Asp sequential transfer of a phosphate group between first a His and an Asp of the HK protein, followed by the transfer to a conserved His of the HPt protein and finally the transfer to an Asp in the receiver domain of the RR protein. Predominantly expressed in roots.

The protein resides in the nucleus. Its function is as follows. Functions as a response regulator involved in His-to-Asp phosphorelay signal transduction system. Phosphorylation of the Asp residue in the receiver domain activates the ability of the protein to promote the transcription of target genes. Type-A response regulators seem to act as negative regulators of the cytokinin signaling. The chain is Two-component response regulator ARR6 (ARR6) from Arabidopsis thaliana (Mouse-ear cress).